The following is a 394-amino-acid chain: MSRLRWLTAGESHGPALVATLEGLPAGVPITTDMVADHLARRRLGYGRGARMKFERDEVTFLGGVRHGLTLGSPVAIMVGNTEWPKWEQVMAADPVDPAILADLARNAPLTRPRPGHADLAGMQKYGFDEARPILERASARETAARVALGAVARSYLKETAGIEIVSHVVELAAAKAPYGVYPTPADVEKLDADPVRCLDADASKAMVAEIDQAHKDGDTLGGVVEVLAYDVPVGLGSHVHWDRRLDARLAAALMGIQAIKGVEVGDGFELARVPGSKAHDEIVQTADGVRRTTGRSGGTEGGLTTGELLRVRAAMKPIATVPRALATIDVATGEATKAHHQRSDVCAVPAAGIVAEAMVALVLADAVAEKFGGDSVPETRRNVRSYLDNLVVR.

The NADP(+) site is built by Arg42 and Arg48. Residues 137-139, 258-259, Gly302, 317-321, and Arg343 contribute to the FMN site; these read RAS, QA, and KPIAT.

It belongs to the chorismate synthase family. In terms of assembly, homotetramer. The cofactor is FMNH2.

The catalysed reaction is 5-O-(1-carboxyvinyl)-3-phosphoshikimate = chorismate + phosphate. Its pathway is metabolic intermediate biosynthesis; chorismate biosynthesis; chorismate from D-erythrose 4-phosphate and phosphoenolpyruvate: step 7/7. Functionally, catalyzes the anti-1,4-elimination of the C-3 phosphate and the C-6 proR hydrogen from 5-enolpyruvylshikimate-3-phosphate (EPSP) to yield chorismate, which is the branch point compound that serves as the starting substrate for the three terminal pathways of aromatic amino acid biosynthesis. This reaction introduces a second double bond into the aromatic ring system. The sequence is that of Chorismate synthase from Streptomyces avermitilis (strain ATCC 31267 / DSM 46492 / JCM 5070 / NBRC 14893 / NCIMB 12804 / NRRL 8165 / MA-4680).